Here is a 2346-residue protein sequence, read N- to C-terminus: Acetyl-CoA carboxylase 1 (2346 aa).

Met1 is subject to N-acetylmethionine. 8 positions are modified to phosphoserine: Ser5, Ser23, Ser25, Ser29, Ser34, Ser48, Ser50, and Ser53. Thr58 is subject to Phosphothreonine. Ser78 carries the phosphoserine modification. A Phosphoserine; by AMPK modification is found at Ser80. The 502-residue stretch at 117–618 folds into the Biotin carboxylation domain; the sequence is VIEKVLIANN…GTGWLDRLIA (502 aa). The region spanning 275–466 is the ATP-grasp domain; that stretch reads SKRILNVPQE…LPAAQLQIAM (192 aa). 315 to 320 lines the ATP pocket; the sequence is GGGGKG. Mg(2+) is bound by residues Glu424, Glu437, and Asn439. Mn(2+) is bound by residues Glu424, Glu437, and Asn439. Residue Arg441 is part of the active site. Thr610 is modified (phosphothreonine). The region spanning 745-819 is the Biotinyl-binding domain; the sequence is FEKENDPSVL…DPGCVIAKMQ (75 aa). Lys786 bears the N6-biotinyllysine mark. Ser835, Ser1201, Ser1216, and Ser1218 each carry phosphoserine. The residue at position 1227 (Thr1227) is a Phosphothreonine. A phosphoserine mark is found at Ser1259, Ser1263, and Ser1273. Lys1334 carries the post-translational modification N6-acetyllysine. A CoA carboxyltransferase N-terminal domain is found at 1576-1914; sequence PYVTKDQLQS…SVYSSVPLLN (339 aa). Positions 1576–2234 are carboxyltransferase; sequence PYVTKDQLQS…EDLVKKKIHN (659 aa). Positions 1823, 2127, and 2129 each coordinate CoA. The CoA carboxyltransferase C-terminal domain maps to 1918–2234; the sequence is PIDRVIEFVP…EDLVKKKIHN (317 aa). Thr2153 carries the post-translational modification Phosphothreonine.

In terms of assembly, monomer, homodimer, and homotetramer. Can form filamentous polymers. Interacts in its inactive phosphorylated form with the BRCT domains of BRCA1 which prevents ACACA dephosphorylation and inhibits lipid synthesis. Interacts with MID1IP1; interaction with MID1IP1 promotes oligomerization and increases its activity. Requires Mg(2+) as cofactor. Mn(2+) is required as a cofactor. Biotin serves as cofactor. Post-translationally, phosphorylation on Ser-1263 is required for interaction with BRCA1. In terms of processing, phosphorylation at Ser-80 by AMPK inactivates enzyme activity. The biotin cofactor is covalently attached to the central biotinyl-binding domain and is required for the catalytic activity.

It is found in the cytoplasm. Its subcellular location is the cytosol. It carries out the reaction hydrogencarbonate + acetyl-CoA + ATP = malonyl-CoA + ADP + phosphate + H(+). The protein operates within lipid metabolism; malonyl-CoA biosynthesis; malonyl-CoA from acetyl-CoA: step 1/1. Inhibited by phosphorylation. Citrate promotes oligomerization of the protein into filaments that correspond to the most active form of the carboxylase. Cytosolic enzyme that catalyzes the carboxylation of acetyl-CoA to malonyl-CoA, the first and rate-limiting step of de novo fatty acid biosynthesis. This is a 2 steps reaction starting with the ATP-dependent carboxylation of the biotin carried by the biotin carboxyl carrier (BCC) domain followed by the transfer of the carboxyl group from carboxylated biotin to acetyl-CoA. This chain is Acetyl-CoA carboxylase 1, found in Bos taurus (Bovine).